A 77-amino-acid polypeptide reads, in one-letter code: Large ribosomal subunit protein uL29 (77 aa).

Belongs to the universal ribosomal protein uL29 family.

The chain is Large ribosomal subunit protein uL29 from Gluconobacter oxydans (strain 621H) (Gluconobacter suboxydans).